The primary structure comprises 104 residues: MSRVCELTNRKKSFGNKVSHSNRKAKRIFLLNLHNVTLISNILNKKFKFRVAIRTLRTIDYKGNLDAFLLNTRTVKLSKKAQKIKRKLKKVLAKQEVELGISDA.

The protein belongs to the bacterial ribosomal protein bL28 family.

The protein is Large ribosomal subunit protein bL28 of Wolbachia sp. subsp. Brugia malayi (strain TRS).